The following is a 391-amino-acid chain: Oxygen-dependent coproporphyrinogen-III oxidase, chloroplastic (391 aa).

Over residues 1–13 the composition is skewed to polar residues; that stretch reads MASSLLTTPSQTL. The disordered stretch occupies residues 1–34; sequence MASSLLTTPSQTLAPNPAAARARRSSPAAAQVSF. A compositionally biased stretch (low complexity) spans 14–30; sequence APNPAAARARRSSPAAA. Residues 125-134 are important for dimerization; the sequence is VLQDGNVFEK. Position 179 (S179) interacts with substrate. The active-site Proton donor is the H193. Substrate contacts are provided by residues 195–197 and 349–354; these read NYR and GGRIES. Positions 331–366 are important for dimerization; that stretch reads YVEFNLVYDRGTTFGLKTGGRIESILVSLPLTARWE.

Belongs to the aerobic coproporphyrinogen-III oxidase family. In terms of assembly, homodimer.

It localises to the plastid. Its subcellular location is the chloroplast. It catalyses the reaction coproporphyrinogen III + O2 + 2 H(+) = protoporphyrinogen IX + 2 CO2 + 2 H2O. Its pathway is porphyrin-containing compound metabolism; protoporphyrin-IX biosynthesis; protoporphyrinogen-IX from coproporphyrinogen-III (O2 route): step 1/1. Functionally, involved in the heme and chlorophyll biosynthesis. Catalyzes the aerobic oxidative decarboxylation of propionate groups of rings A and B of coproporphyrinogen-III to yield the vinyl groups in protoporphyrinogen-IX. This chain is Oxygen-dependent coproporphyrinogen-III oxidase, chloroplastic (CPX), found in Hordeum vulgare (Barley).